Here is a 118-residue protein sequence, read N- to C-terminus: Large ribosomal subunit protein bL19 (118 aa).

Belongs to the bacterial ribosomal protein bL19 family.

Its function is as follows. This protein is located at the 30S-50S ribosomal subunit interface and may play a role in the structure and function of the aminoacyl-tRNA binding site. This Citrifermentans bemidjiense (strain ATCC BAA-1014 / DSM 16622 / JCM 12645 / Bem) (Geobacter bemidjiensis) protein is Large ribosomal subunit protein bL19.